We begin with the raw amino-acid sequence, 73 residues long: Antimicrobial peptide TsAP-2 (73 aa).

A signal peptide spans 1–22 (MQIKHLITIFFLVLIVADHCHA). Position 39 is a lysine amide (Lys39). The propeptide occupies 45–73 (EITSQIEQYRNLQKREAELENLLANLPVY).

It belongs to the non-disulfide-bridged peptide (NDBP) superfamily. Short antimicrobial peptide (group 4) family. Expressed by the venom gland.

The protein localises to the secreted. Functionally, antimicrobial peptide. Has a high antibacterial activity against the Gram-positive bacterium S.aureus (MIC=5-17.30 uM), the methicillin-resistant S.aureus (MRSA) (MIC=17.30 uM), and E.faecalis (MIC=69.23 uM). Has antifungal activity against Candida spp. and one Cryptococcus neoformans strains with MICs values ranging from 6.25 to 100 uM. Also shows an inhibitory activity on C.albicans biofilms at high concentrations. Has a moderate hemolytic potency (18% at 20 uM). Also inhibits the growth of the five human cancer cell lines tested (the squamous carcinoma cell line H157 (IC(50)=4.1 uM), the lung adenocarcinoma cell line H838 (11.0 uM), the breast carcinoma cell line MCF-7 (6.4 uM), the androgen-independent prostate adenocarcinoma cell line PC3 (13.3 uM) and the glioblastoma cell line U251-MG (15.4 uM)). In the model of polymicrobial sepsis, it exhibits an antibiotic effect, reducing the levels of microorganisms in the infectious focus and the inflammatory responses in the lung and cecum of septic animals. This is Antimicrobial peptide TsAP-2 from Tityus serrulatus (Brazilian scorpion).